We begin with the raw amino-acid sequence, 259 residues long: Thiazole synthase (259 aa).

Lys-95 (schiff-base intermediate with DXP) is an active-site residue. 1-deoxy-D-xylulose 5-phosphate-binding positions include Gly-156, 183-184 (AG), and 205-206 (NS).

It belongs to the ThiG family. As to quaternary structure, homotetramer. Forms heterodimers with either ThiH or ThiS.

It localises to the cytoplasm. The enzyme catalyses [ThiS sulfur-carrier protein]-C-terminal-Gly-aminoethanethioate + 2-iminoacetate + 1-deoxy-D-xylulose 5-phosphate = [ThiS sulfur-carrier protein]-C-terminal Gly-Gly + 2-[(2R,5Z)-2-carboxy-4-methylthiazol-5(2H)-ylidene]ethyl phosphate + 2 H2O + H(+). Its pathway is cofactor biosynthesis; thiamine diphosphate biosynthesis. Functionally, catalyzes the rearrangement of 1-deoxy-D-xylulose 5-phosphate (DXP) to produce the thiazole phosphate moiety of thiamine. Sulfur is provided by the thiocarboxylate moiety of the carrier protein ThiS. In vitro, sulfur can be provided by H(2)S. This is Thiazole synthase from Coxiella burnetii (strain RSA 331 / Henzerling II).